The following is a 491-amino-acid chain: Stromelysin-3 (491 aa).

A signal peptide spans 1-35 (MARAACLLRAISRALLLPLPLLLLLLLLLPPQLMA). The propeptide at 36–101 (RARPPENHRH…VLNARNRQKR (66 aa)) is activation peptide. A Cysteine switch motif is present at residues 82–89 (LRCGVPDP). Zn(2+) contacts are provided by C84, H168, and D170. Ca(2+)-binding residues include D175, G176, G178, and I180. Residues H183, H196, and H218 each coordinate Zn(2+). E219 is an active-site residue. Residues H222 and H228 each contribute to the Zn(2+) site. The interval 260–279 (YGRPQLTPTSPTPTLSSQAG) is disordered. The span at 263–277 (PQLTPTSPTPTLSSQ) shows a compositional bias: low complexity. Residues C297 and C483 are joined by a disulfide bond. Hemopexin repeat units follow at residues 298 to 342 (ETSF…WQGL), 343 to 385 (PSPV…KLGL), 387 to 435 (GSPV…WRGV), and 436 to 483 (PSEI…FFDC).

This sequence belongs to the peptidase M10A family. Ca(2+) serves as cofactor. It depends on Zn(2+) as a cofactor. The precursor is cleaved by a furin endopeptidase. In terms of tissue distribution, highly expressed in ovary and uterus.

The protein resides in the secreted. It localises to the extracellular space. Its subcellular location is the extracellular matrix. May play an important role in the progression of epithelial malignancies. The chain is Stromelysin-3 (Mmp11) from Rattus norvegicus (Rat).